Consider the following 854-residue polypeptide: Envelope glycoprotein gp150 (854 aa).

Residues 1–783 (MAEGFAANRQ…WIGNIPQYLK (783 aa)) are Extracellular-facing. 15 N-linked (GlcNAc...) asparagine; by host glycosylation sites follow: Asn218, Asn256, Asn267, Asn272, Asn296, Asn328, Asn334, Asn340, Asn416, Asn420, Asn479, Asn497, Asn529, Asn546, and Asn549. The fusion peptide stretch occupies residues 614–634 (VMLALATVLSMAGAGTGATAI). A coiled-coil region spans residues 641–691 (QQVLATHQEAIEKVTEALKINNLRLVTLEHQVLVIGLKVEAMEKFLYTAFA). The immunosuppression stretch occupies residues 660 to 678 (INNLRLVTLEHQVLVIGLK). Residues Asn715, Asn719, Asn727, and Asn735 are each glycosylated (N-linked (GlcNAc...) asparagine; by host). A coiled-coil region spans residues 734–770 (YNQTKDLQQRFYEIIMDIEQNNVQGKKGLQQLQEWED). A helical membrane pass occupies residues 784–804 (GLLGGILGIGLGMLLLILCLP). Residues 805-854 (TLVDCIRNCIHKILGYTVIAMPEVEEEEIQPQMELRRNGRQCGMSEKEEE) lie on the Cytoplasmic side of the membrane.

In terms of assembly, the mature envelope protein (Env) consists of a trimer of SU-TM heterodimers attached by noncovalent interactions or by a labile interchain disulfide bond. Post-translationally, specific enzymatic cleavages in vivo yield mature proteins. Envelope glycoproteins are synthesized as an inactive precursor that is N-glycosylated and processed likely by host cell furin or by a furin-like protease in the Golgi to yield the mature SU and TM proteins. The cleavage site between SU and TM requires the minimal sequence [KR]-X-[KR]-R.

The protein resides in the virion membrane. The protein localises to the host cell membrane. The surface protein (SU) attaches the virus to the host cell by binding to its receptor. This interaction triggers the refolding of the transmembrane protein (TM) and is thought to activate its fusogenic potential by unmasking its fusion peptide. Fusion occurs at the host cell plasma membrane. Functionally, the transmembrane protein (TM) acts as a class I viral fusion protein. Under the current model, the protein has at least 3 conformational states: pre-fusion native state, pre-hairpin intermediate state, and post-fusion hairpin state. During viral and target cell membrane fusion, the coiled coil regions (heptad repeats) assume a trimer-of-hairpins structure, positioning the fusion peptide in close proximity to the C-terminal region of the ectodomain. The formation of this structure appears to drive apposition and subsequent fusion of viral and target cell membranes. Membranes fusion leads to delivery of the nucleocapsid into the cytoplasm. The protein is Envelope glycoprotein gp150 (env) of Feline immunodeficiency virus (isolate Wo) (FIV).